A 223-amino-acid chain; its full sequence is Sigma non-opioid intracellular receptor 1 (223 aa).

Over 1–9 (MPWAAGRRW) the chain is Lumenal. The segment at 2-8 (PWAAGRR) is targeting to endoplasmic reticulum-associated lipid droplets. A helical transmembrane segment spans residues 10 to 30 (AWITLILTIIAVLIQAAWLWL). The Cytoplasmic segment spans residues 31-223 (GTQNFVFSRE…LTTYLFGQDS (193 aa)). Residues 99–106 (SLSEYVLL) form an important for ligand-binding region. Residues 177–223 (VIPSTLFFALADTFFSTQDYLTLFYTLRAYARGLRLELTTYLFGQDS) are C-terminal hydrophobic region.

The protein belongs to the ERG2 family. In terms of assembly, homotrimer. Interacts with KCNA4. Interacts with KCNA2; cocaine consumption leads to increased interaction. Forms a ternary complex with ANK2 and ITPR3. The complex is disrupted by agonists. Interacts with RNF112 in an oxidative stress-regulated manner. In terms of tissue distribution, widely expressed with higher expression in liver, brain, kidney and thymus. Expressed throughout the brain with higher expression within cerebral cortex, hippocampus and cerebellum. Within the hippocampus expressed in cornu ammonis pyramidal neurons, the granular cells of the dentate gyrus as well as interneurons. Within the cerebellum, expressed in Purkinje cell bodies. Highly expressed in the brainstem and motor neurons of the spinal cord. Expressed by neural retina, retinal pigment epithelial cells and lens.

It localises to the nucleus inner membrane. The protein resides in the nucleus outer membrane. It is found in the nucleus envelope. Its subcellular location is the cytoplasmic vesicle. The protein localises to the endoplasmic reticulum membrane. It localises to the membrane. The protein resides in the lipid droplet. It is found in the cell junction. Its subcellular location is the cell membrane. The protein localises to the cell projection. It localises to the growth cone. The protein resides in the postsynaptic density membrane. In terms of biological role, functions in lipid transport from the endoplasmic reticulum and is involved in a wide array of cellular functions probably through regulation of the biogenesis of lipid microdomains at the plasma membrane. Involved in the regulation of different receptors it plays a role in BDNF signaling and EGF signaling. Also regulates ion channels like the potassium channel and could modulate neurotransmitter release. Plays a role in calcium signaling through modulation together with ANK2 of the ITP3R-dependent calcium efflux at the endoplasmic reticulum. Plays a role in several other cell functions including proliferation, survival and death. Originally identified for its ability to bind various psychoactive drugs it is involved in learning processes, memory and mood alteration. Necessary for proper mitochondrial axonal transport in motor neurons, in particular the retrograde movement of mitochondria. Plays a role in protecting cells against oxidative stress-induced cell death via its interaction with RNF112. The polypeptide is Sigma non-opioid intracellular receptor 1 (Sigmar1) (Mus musculus (Mouse)).